A 257-amino-acid polypeptide reads, in one-letter code: UPF0246 protein swp_3736 (257 aa).

Belongs to the UPF0246 family.

The sequence is that of UPF0246 protein swp_3736 from Shewanella piezotolerans (strain WP3 / JCM 13877).